We begin with the raw amino-acid sequence, 302 residues long: Sulfate adenylyltransferase subunit 2 (302 aa).

A disordered region spans residues 279–302; sequence ERQGRAIDHDSSGSMELKKRQGYF. Residues 280 to 302 are compositionally biased toward basic and acidic residues; the sequence is RQGRAIDHDSSGSMELKKRQGYF.

This sequence belongs to the PAPS reductase family. CysD subfamily. In terms of assembly, heterodimer composed of CysD, the smaller subunit, and CysN.

It catalyses the reaction sulfate + ATP + H(+) = adenosine 5'-phosphosulfate + diphosphate. It functions in the pathway sulfur metabolism; hydrogen sulfide biosynthesis; sulfite from sulfate: step 1/3. Its function is as follows. With CysN forms the ATP sulfurylase (ATPS) that catalyzes the adenylation of sulfate producing adenosine 5'-phosphosulfate (APS) and diphosphate, the first enzymatic step in sulfur assimilation pathway. APS synthesis involves the formation of a high-energy phosphoric-sulfuric acid anhydride bond driven by GTP hydrolysis by CysN coupled to ATP hydrolysis by CysD. The protein is Sulfate adenylyltransferase subunit 2 of Aliivibrio fischeri (strain ATCC 700601 / ES114) (Vibrio fischeri).